Here is a 565-residue protein sequence, read N- to C-terminus: Oxygen-dependent choline dehydrogenase (565 aa).

6–35 (DYIIVGAGSAGNTLATRLTEDAGVTVLLLE) serves as a coordination point for FAD. Residues 182-201 (QQEGFGPMDRTVTKNGRRSS) form a disordered region. His-475 (proton acceptor) is an active-site residue.

The protein belongs to the GMC oxidoreductase family. FAD is required as a cofactor.

It carries out the reaction choline + A = betaine aldehyde + AH2. The enzyme catalyses betaine aldehyde + NAD(+) + H2O = glycine betaine + NADH + 2 H(+). Its pathway is amine and polyamine biosynthesis; betaine biosynthesis via choline pathway; betaine aldehyde from choline (cytochrome c reductase route): step 1/1. Its function is as follows. Involved in the biosynthesis of the osmoprotectant glycine betaine. Catalyzes the oxidation of choline to betaine aldehyde and betaine aldehyde to glycine betaine at the same rate. This is Oxygen-dependent choline dehydrogenase from Pseudomonas putida (strain ATCC 47054 / DSM 6125 / CFBP 8728 / NCIMB 11950 / KT2440).